The primary structure comprises 156 residues: MNETMICAVGNVATTPVFRDLANGPSVRFRLAVTARYWDREKNAWTDGHTNFFTVWANRQLATNASGSLAVGDPVVVQGRLKVRTDVREGQSRTSADIDAVAIGHDLARGTAAFRRTARTEASTSPPRPEPNWEVPAGGTPGEPVPEQRPDPVPVG.

One can recognise an SSB domain in the interval 1 to 107 (MNETMICAVG…IDAVAIGHDL (107 aa)). Low complexity predominate over residues 114–124 (FRRTARTEAST). The tract at residues 114 to 156 (FRRTARTEASTSPPRPEPNWEVPAGGTPGEPVPEQRPDPVPVG) is disordered.

Homotetramer.

The polypeptide is Single-stranded DNA-binding protein 1 (ssb1) (Streptomyces coelicolor (strain ATCC BAA-471 / A3(2) / M145)).